Consider the following 442-residue polypeptide: MASVVLPSGSQCAAAAAAAAPPGLRLRLLLLLFSAAALIPTGDGQNLFTKDVTVIEGEVATISCQVNKSDDSVIQLLNPNRQTIYFRDFRPLKDSRFQLLNFSSSELKVSLTNVSISDEGRYFCQLYTDPPQESYTTITVLVPPRNLMIDIQKDTAVEGEEIEVNCTAMASKPATTIRWFKGNTELKGKSEVEEWSDMYTVTSQLMLKVHKEDDGVPVICQVEHPAVTGNLQTQRYLEVQYKPQVHIQMTYPLQGLTREGDALELTCEAIGKPQPVMVTWVRVDDEMPQHAVLSGPNLFINNLNKTDNGTYRCEASNIVGKAHSDYMLYVYDPPTTIPPPTTTTTTTTTTTTTILTIITDSRAGEEGSIRAVDHAVIGGVVAVVVFAMLCLLIILGRYFARHKGTYFTHEAKGADDAADADTAIINAEGGQNNSEEKKEYFI.

Residues 1–44 form the signal peptide; the sequence is MASVVLPSGSQCAAAAAAAAPPGLRLRLLLLLFSAAALIPTGDG. One can recognise an Ig-like V-type domain in the interval 45-139; that stretch reads QNLFTKDVTV…PPQESYTTIT (95 aa). Over 45 to 374 the chain is Extracellular; that stretch reads QNLFTKDVTV…EEGSIRAVDH (330 aa). Residues cysteine 64 and cysteine 124 are joined by a disulfide bond. N-linked (GlcNAc...) asparagine glycans are attached at residues asparagine 67, asparagine 101, asparagine 113, and asparagine 165. Ig-like C2-type domains follow at residues 144-238 and 243-329; these read PRNL…RYLE and PQVH…YMLY. 2 disulfides stabilise this stretch: cysteine 166–cysteine 220 and cysteine 267–cysteine 313. 2 N-linked (GlcNAc...) asparagine glycosylation sites follow: asparagine 304 and asparagine 308. Residues 375-395 traverse the membrane as a helical segment; sequence AVIGGVVAVVVFAMLCLLIIL. Topologically, residues 396–442 are cytoplasmic; that stretch reads GRYFARHKGTYFTHEAKGADDAADADTAIINAEGGQNNSEEKKEYFI. Residue threonine 422 is modified to Phosphothreonine. Phosphoserine is present on serine 434.

This sequence belongs to the nectin family. In terms of assembly, homodimer (via Ig-like V-type domain). Interacts with FARP1. Interacts (via Ig-like V-type domain) with CRTAM (via Ig-like V-type domain); the interaction competes with CRTAM homodimerization and CADM1 homodimerization. Interacts (via C-terminus) with EPB41L3/DAL1. The interaction with EPB41L3/DAL1 may act to anchor CADM1 to the actin cytoskeleton. Interacts (via C-terminus) with MPP2 (via PDZ domain). Interacts (via C-terminus) with MPP3 (via PDZ domain); this interaction connects CADM1 with DLG1. Interacts (via C-terminus) with PALS2 (via PDZ domain). (Microbial infection) Interacts with herpes virus 8 proteins vFLIP and vGPCR; these interactions are essential for NF-kappa-B activation. Post-translationally, glycosylation at Asn-67 and Asn-101 promotes adhesive binding and synapse induction.

Its subcellular location is the cell membrane. It localises to the synapse. Functionally, mediates homophilic cell-cell adhesion in a Ca(2+)-independent manner. Also mediates heterophilic cell-cell adhesion with CADM3 and NECTIN3 in a Ca(2+)-independent manner. Interaction with CRTAM promotes natural killer (NK) cell cytotoxicity and interferon-gamma (IFN-gamma) secretion by CD8+ cells in vitro as well as NK cell-mediated rejection of tumors expressing CADM1 in vivo. In mast cells, may mediate attachment to and promote communication with nerves. CADM1, together with MITF, is essential for development and survival of mast cells in vivo. By interacting with CRTAM and thus promoting the adhesion between CD8+ T-cells and CD8+ dendritic cells, regulates the retention of activated CD8+ T-cell within the draining lymph node. Required for the intestinal retention of intraepithelial CD4+ CD8+ T-cells and, to a lesser extent, intraepithelial and lamina propria CD8+ T-cells and CD4+ T-cells. Interaction with CRTAM promotes the adhesion to gut-associated CD103+ dendritic cells, which may facilitate the expression of gut-homing and adhesion molecules on T-cells and the conversion of CD4+ T-cells into CD4+ CD8+ T-cells. Acts as a synaptic cell adhesion molecule and plays a role in the formation of dendritic spines and in synapse assembly. May be involved in neuronal migration, axon growth, pathfinding, and fasciculation on the axons of differentiating neurons. May play diverse roles in the spermatogenesis including in the adhesion of spermatocytes and spermatids to Sertoli cells and for their normal differentiation into mature spermatozoa. Acts as a tumor suppressor in non-small-cell lung cancer (NSCLC) cells. May contribute to the less invasive phenotypes of lepidic growth tumor cells. (Microbial infection) Induces cell fusion in neuron infected by a neuropathogenic strain of measles. Interacts with measles hemagglutinin to trigger hyperfusogenic F-mediated membrane fusion and presumably transsynaptic cell-to-cell transmission of the virus. The protein is Cell adhesion molecule 1 of Homo sapiens (Human).